The chain runs to 638 residues: Threonine--tRNA ligase 2 (638 aa).

The TGS domain occupies 1 to 64 (MSKHVHIQLP…EEDAELSIVT (64 aa)). The tract at residues 245-535 (DHRKLGKQLG…LIEHYGGAFP (291 aa)) is catalytic. Zn(2+)-binding residues include Cys-336, His-387, and His-512.

Belongs to the class-II aminoacyl-tRNA synthetase family. In terms of assembly, homodimer. Zn(2+) is required as a cofactor.

Its subcellular location is the cytoplasm. It catalyses the reaction tRNA(Thr) + L-threonine + ATP = L-threonyl-tRNA(Thr) + AMP + diphosphate + H(+). In terms of biological role, catalyzes the attachment of threonine to tRNA(Thr) in a two-step reaction: L-threonine is first activated by ATP to form Thr-AMP and then transferred to the acceptor end of tRNA(Thr). Also edits incorrectly charged L-seryl-tRNA(Thr). This chain is Threonine--tRNA ligase 2 (thrZ), found in Bacillus subtilis (strain 168).